A 204-amino-acid polypeptide reads, in one-letter code: MLPFPAMNLKKSRSENSSVASSGSKIEEQTEKSAEPTTIKVQKKAGTPGRSIDVFAVQCEKCMKWRKIDTQDEYEDIRSRVQEDPFFCKTKEGVSCEDVGDLNYDSSRTWVIDKPGLPRTPRGFKRSLILRKDYSKMDAYYITPTGKKLKSRNEIAAFIDANQDYKYALLGDFNFTVPKVMEETVPSGILSDRTPKPSRKVTID.

Residues 1–46 are disordered; sequence MLPFPAMNLKKSRSENSSVASSGSKIEEQTEKSAEPTTIKVQKKAG. The span at 15 to 24 shows a compositional bias: polar residues; the sequence is ENSSVASSGS. Basic and acidic residues predominate over residues 25–34; sequence KIEEQTEKSA. Residues 49 to 104 form a CW-type zinc finger; that stretch reads GRSIDVFAVQCEKCMKWRKIDTQDEYEDIRSRVQEDPFFCKTKEGVSCEDVGDLNY. An MBD-associated domain (MAD) motif is present at residues 58 to 96; that stretch reads QCEKCMKWRKIDTQDEYEDIRSRVQEDPFFCKTKEGVSC. Cys59, Cys62, Cys88, and Cys96 together coordinate Zn(2+). Positions 110–180 constitute an MBD domain; the sequence is WVIDKPGLPR…GDFNFTVPKV (71 aa).

As to expression, mostly expressed in flowers and buds.

The protein localises to the nucleus. Functionally, probable transcriptional regulator. The polypeptide is Methyl-CpG-binding domain-containing protein 1 (MBD1) (Arabidopsis thaliana (Mouse-ear cress)).